A 388-amino-acid chain; its full sequence is Ferrochelatase (388 aa).

Fe cation-binding residues include histidine 196 and glutamate 277.

The protein belongs to the ferrochelatase family.

The protein localises to the cytoplasm. It carries out the reaction heme b + 2 H(+) = protoporphyrin IX + Fe(2+). Its pathway is porphyrin-containing compound metabolism; protoheme biosynthesis; protoheme from protoporphyrin-IX: step 1/1. Catalyzes the ferrous insertion into protoporphyrin IX. The sequence is that of Ferrochelatase from Trichormus variabilis (strain ATCC 29413 / PCC 7937) (Anabaena variabilis).